A 363-amino-acid chain; its full sequence is FMNH(2)-dependent dimethylsulfone monooxygenase (363 aa).

It belongs to the SsuD family.

The enzyme catalyses dimethyl sulfone + FMNH2 + O2 = methanesulfinate + FMN + formaldehyde + H2O + 2 H(+). In terms of biological role, involved in the dimethyl sulfide degradation pathway. Catalyzes the oxidation of dimethylsulfone (DMSO2) to yield methanesulfinate, which is oxidized spontaneously to methanesulfonate in the presence of dioxygen and FMNH(2). The protein is FMNH(2)-dependent dimethylsulfone monooxygenase of Pseudomonas putida (Arthrobacter siderocapsulatus).